Here is a 530-residue protein sequence, read N- to C-terminus: Phosphoenolpyruvate carboxykinase (ATP) (530 aa).

The substrate site is built by arginine 58, tyrosine 195, and lysine 201. Residues lysine 201, histidine 220, and 236–244 (GLSGTGKTT) contribute to the ATP site. Mn(2+) is bound by residues lysine 201 and histidine 220. Aspartate 257 provides a ligand contact to Mn(2+). Residues glutamate 285, arginine 321, 440-441 (RI), and threonine 446 each bind ATP. Substrate is bound at residue arginine 321.

The protein belongs to the phosphoenolpyruvate carboxykinase (ATP) family. Mn(2+) serves as cofactor.

It is found in the cytoplasm. The enzyme catalyses oxaloacetate + ATP = phosphoenolpyruvate + ADP + CO2. It functions in the pathway carbohydrate biosynthesis; gluconeogenesis. Functionally, involved in the gluconeogenesis. Catalyzes the conversion of oxaloacetate (OAA) to phosphoenolpyruvate (PEP) through direct phosphoryl transfer between the nucleoside triphosphate and OAA. This Staphylococcus aureus (strain bovine RF122 / ET3-1) protein is Phosphoenolpyruvate carboxykinase (ATP).